A 141-amino-acid chain; its full sequence is Nucleoside diphosphate kinase (141 aa).

Positions 11, 59, 87, 93, 104, and 114 each coordinate ATP. Catalysis depends on histidine 117, which acts as the Pros-phosphohistidine intermediate.

This sequence belongs to the NDK family. In terms of assembly, homotetramer. Requires Mg(2+) as cofactor.

It is found in the cytoplasm. The enzyme catalyses a 2'-deoxyribonucleoside 5'-diphosphate + ATP = a 2'-deoxyribonucleoside 5'-triphosphate + ADP. It catalyses the reaction a ribonucleoside 5'-diphosphate + ATP = a ribonucleoside 5'-triphosphate + ADP. Functionally, major role in the synthesis of nucleoside triphosphates other than ATP. The ATP gamma phosphate is transferred to the NDP beta phosphate via a ping-pong mechanism, using a phosphorylated active-site intermediate. The chain is Nucleoside diphosphate kinase from Cupriavidus metallidurans (strain ATCC 43123 / DSM 2839 / NBRC 102507 / CH34) (Ralstonia metallidurans).